We begin with the raw amino-acid sequence, 590 residues long: Transcription factor GTE7 (590 aa).

Positions 125 to 160 are disordered; it reads LNNFTGEKNDLGPKKKKQKKNVSGLKRSNQFGPSDP. The 107-residue stretch at 164–270 folds into the Bromo domain; that stretch reads KLLAGMLNTC…DHFDGMFNPA (107 aa). 2 disordered regions span residues 282 to 400 and 476 to 590; these read TGSS…KDPN and RQGF…EAQC. The segment covering 288 to 298 has biased composition (basic and acidic residues); that stretch reads PEPDFKPDFKQ. The span at 347 to 369 shows a compositional bias: pro residues; that stretch reads PSPPPPPPVIQPELPQPQPPPPQ. The 82-residue stretch at 394 to 475 folds into the NET domain; sequence PKAKDPNKRL…NYKKMASKIK (82 aa). Over residues 498–508 the composition is skewed to basic and acidic residues; that stretch reads SAEKRTRRGDA. Acidic residues predominate over residues 509-521; sequence GEEDVDIGEDIPI. A compositionally biased stretch (low complexity) spans 537-562; sequence AAAASSGSSSSGSSSSSGGSSSSSDS.

The protein resides in the nucleus. The polypeptide is Transcription factor GTE7 (GTE7) (Arabidopsis thaliana (Mouse-ear cress)).